Consider the following 199-residue polypeptide: Peroxynitrite isomerase (199 aa).

Residues 20 to 26 carry the GXWXGXG motif; the sequence is GVWEGSG. Lysine 158 and histidine 190 together coordinate heme b.

Belongs to the nitrobindin family. In terms of assembly, homodimer. Heme b serves as cofactor.

It catalyses the reaction peroxynitrite = nitrate. It functions in the pathway nitrogen metabolism. In terms of biological role, heme-binding protein able to scavenge peroxynitrite and to protect free L-tyrosine against peroxynitrite-mediated nitration, by acting as a peroxynitrite isomerase that converts peroxynitrite to nitrate. Therefore, this protein likely plays a role in peroxynitrite sensing and in the detoxification of reactive nitrogen and oxygen species (RNS and ROS, respectively). Is able to bind nitric oxide (NO) in vitro, but may act as a sensor of peroxynitrite levels in vivo. This is Peroxynitrite isomerase from Clavibacter sepedonicus (Clavibacter michiganensis subsp. sepedonicus).